The following is a 142-amino-acid chain: Small ribosomal subunit protein bS16 (142 aa).

The disordered stretch occupies residues 88–142 (GAEGTLRQPEGKTPFVAPDNGSVIIPEAITPKAEKAEEAPAEDAAPAEDDAEKAE). Acidic residues predominate over residues 126 to 142 (APAEDAAPAEDDAEKAE).

It belongs to the bacterial ribosomal protein bS16 family.

In Kocuria rhizophila (strain ATCC 9341 / DSM 348 / NBRC 103217 / DC2201), this protein is Small ribosomal subunit protein bS16.